We begin with the raw amino-acid sequence, 56 residues long: Large ribosomal subunit protein bL32c (56 aa).

Residues 1-20 are compositionally biased toward basic residues; it reads MAAPKKRTSKSRKNMRKSTW. Residues 1–28 form a disordered region; the sequence is MAAPKKRTSKSRKNMRKSTWKRQAATQA.

This sequence belongs to the bacterial ribosomal protein bL32 family.

Its subcellular location is the plastid. The protein localises to the chloroplast. The sequence is that of Large ribosomal subunit protein bL32c (rpl32) from Mesostigma viride (Green alga).